A 251-amino-acid chain; its full sequence is ATP synthase subunit a (251 aa).

The next 6 membrane-spanning stretches (helical) occupy residues 30–50 (NSNE…VVAL), 86–106 (FFPF…LGLF), 116–136 (IAIT…VGFW), 145–165 (FFSP…IEIV), 195–215 (FMLM…IIPL), and 219–239 (IALT…FAIL).

It belongs to the ATPase A chain family. As to quaternary structure, F-type ATPases have 2 components, CF(1) - the catalytic core - and CF(0) - the membrane proton channel. CF(1) has five subunits: alpha(3), beta(3), gamma(1), delta(1), epsilon(1). CF(0) has three main subunits: a(1), b(2) and c(9-12). The alpha and beta chains form an alternating ring which encloses part of the gamma chain. CF(1) is attached to CF(0) by a central stalk formed by the gamma and epsilon chains, while a peripheral stalk is formed by the delta and b chains.

The protein localises to the cell inner membrane. Its function is as follows. Key component of the proton channel; it plays a direct role in the translocation of protons across the membrane. This is ATP synthase subunit a from Acidiphilium cryptum (strain JF-5).